A 74-amino-acid polypeptide reads, in one-letter code: uncharacterized protein (74 aa).

This is an uncharacterized protein from Archaeoglobus fulgidus (strain ATCC 49558 / DSM 4304 / JCM 9628 / NBRC 100126 / VC-16).